An 822-amino-acid chain; its full sequence is uncharacterized protein (822 aa).

The disordered stretch occupies residues 1-230 (MARGKRSTQR…NAAPLNKTDA (230 aa)). Position 27 is a phosphoserine (Ser27). Over residues 34–44 (SKAKKNKKKLN) the composition is skewed to basic residues. Ser47, Ser51, and Ser55 each carry phosphoserine. Tyr57 is modified (phosphotyrosine). Residues 61–70 (PEDDEVDEEV) show a composition bias toward acidic residues. Residues 73–85 (VKKKPSKKSKKAK) are compositionally biased toward basic residues. Over residues 92–106 (FADEQSVEEEEEEDS) the composition is skewed to acidic residues. Phosphoserine is present on Ser97. Residues 111–121 (RKNKKSSKKAS) are compositionally biased toward basic residues. 2 stretches are compositionally biased toward acidic residues: residues 129-144 (LADD…EESE) and 163-172 (SEALDDGDIE). Residues Ser137 and Ser163 each carry the phosphoserine modification. 2 consecutive ABC transporter domains span residues 276-519 (LQVE…VQLA) and 594-809 (IKFQ…AKER). ATP contacts are provided by residues 308–315 (APNGSGKS) and 627–634 (GPNGAGKT).

Belongs to the ABC transporter superfamily.

It localises to the cytoplasm. This is an uncharacterized protein from Schizosaccharomyces pombe (strain 972 / ATCC 24843) (Fission yeast).